The chain runs to 237 residues: Photosystem I-associated linker protein CpcL (237 aa).

The 181-residue stretch at 11 to 191 folds into the PBS-linker domain; it reads TTQNQRVQSF…DYRDRAGIVR (181 aa). Residues 208 to 228 traverse the membrane as a helical segment; the sequence is GVAILGVLLAISAGMTFLFVL.

Belongs to the phycobilisome linker protein family. As to quaternary structure, part of a specialized phycobilisome (PBS), a structure that is usually composed of two distinct substructures: a core complex and a number of rods radiating from the core. This protein is part of a core-less PBS rod (called CpcL-PBS). In vegetative cells associated substoichiometrically with photosystem I and phycobiliproteins phycocyanin as well as phycoerythrocyanin in the thylakoid membrane, not found in conventional, hemidiscoidal phycobilisomes.

The protein localises to the cellular thylakoid membrane. Rod linker protein, associated with phycocyanin (PC). Linker polypeptides determine the state of aggregation and the location of the disk-shaped phycobiliprotein units within the phycobilisome (PBS) and modulate their spectroscopic properties in order to mediate a directed and optimal energy transfer. Forms a supercomplex with tetrameric photosystem I (PSI) and PC that allows efficient energy transfer from PC to PSI. This protein seems to be in the middle of the PC hexameric rod and may anchor the PC rods at the periphery of PSI tetramers. May be involved in the cyclic electron transport around PSI that provides ATP needed for N(2) fixation in heterocysts. The polypeptide is Photosystem I-associated linker protein CpcL (Nostoc sp. (strain PCC 7120 / SAG 25.82 / UTEX 2576)).